The sequence spans 310 residues: Protoheme IX farnesyltransferase (310 aa).

9 helical membrane-spanning segments follow: residues 31-51 (VMSL…DSIH), 52-72 (PLIA…AGAM), 102-119 (ALSF…FMAL), 123-145 (ILAS…IWLK), 151-171 (NIVI…AAVS), 179-199 (IILF…IALF), 225-245 (ILIY…IGMN), 248-268 (IYLI…FSLF), and 281-301 (FTYS…TSTI).

This sequence belongs to the UbiA prenyltransferase family. Protoheme IX farnesyltransferase subfamily.

The protein localises to the cell inner membrane. It carries out the reaction heme b + (2E,6E)-farnesyl diphosphate + H2O = Fe(II)-heme o + diphosphate. It participates in porphyrin-containing compound metabolism; heme O biosynthesis; heme O from protoheme: step 1/1. In terms of biological role, converts heme B (protoheme IX) to heme O by substitution of the vinyl group on carbon 2 of heme B porphyrin ring with a hydroxyethyl farnesyl side group. This is Protoheme IX farnesyltransferase from Rickettsia prowazekii (strain Madrid E).